A 191-amino-acid chain; its full sequence is Elongation factor P (191 aa).

Belongs to the elongation factor P family.

Its subcellular location is the cytoplasm. It participates in protein biosynthesis; polypeptide chain elongation. Its function is as follows. Involved in peptide bond synthesis. Stimulates efficient translation and peptide-bond synthesis on native or reconstituted 70S ribosomes in vitro. Probably functions indirectly by altering the affinity of the ribosome for aminoacyl-tRNA, thus increasing their reactivity as acceptors for peptidyl transferase. The chain is Elongation factor P from Ralstonia pickettii (strain 12J).